We begin with the raw amino-acid sequence, 89 residues long: Small ribosomal subunit protein uS15 (89 aa).

It belongs to the universal ribosomal protein uS15 family. In terms of assembly, part of the 30S ribosomal subunit. Forms a bridge to the 50S subunit in the 70S ribosome, contacting the 23S rRNA.

Its function is as follows. One of the primary rRNA binding proteins, it binds directly to 16S rRNA where it helps nucleate assembly of the platform of the 30S subunit by binding and bridging several RNA helices of the 16S rRNA. Forms an intersubunit bridge (bridge B4) with the 23S rRNA of the 50S subunit in the ribosome. This is Small ribosomal subunit protein uS15 from Prochlorococcus marinus subsp. pastoris (strain CCMP1986 / NIES-2087 / MED4).